Here is a 124-residue protein sequence, read N- to C-terminus: Ubiquitin-related modifier 1 (124 aa).

A disordered region spans residues 34–53; the sequence is IPSLVPKDNTTSAKNPPPKD. G124 carries the 1-thioglycine modification. G124 is covalently cross-linked (Glycyl lysine isopeptide (Gly-Lys) (interchain with K-? in acceptor proteins)).

The protein belongs to the URM1 family. In terms of processing, C-terminal thiocarboxylation occurs in 2 steps, it is first acyl-adenylated (-COAMP) via the hesA/moeB/thiF part of UBA4, then thiocarboxylated (-COSH) via the rhodanese domain of UBA4.

The protein localises to the cytoplasm. It participates in tRNA modification; 5-methoxycarbonylmethyl-2-thiouridine-tRNA biosynthesis. Functionally, acts as a sulfur carrier required for 2-thiolation of mcm(5)S(2)U at tRNA wobble positions of cytosolic tRNA(Lys), tRNA(Glu) and tRNA(Gln). Serves as sulfur donor in tRNA 2-thiolation reaction by being thiocarboxylated (-COSH) at its C-terminus by the MOCS3 homolog UBA4. The sulfur is then transferred to tRNA to form 2-thiolation of mcm(5)S(2)U. Prior mcm(5) tRNA modification by the elongator complex is required for 2-thiolation. Also acts as a ubiquitin-like protein (UBL) that is covalently conjugated via an isopeptide bond to lysine residues of target proteins such as AHP1. The thiocarboxylated form serves as substrate for conjugation and oxidative stress specifically induces the formation of UBL-protein conjugates. The polypeptide is Ubiquitin-related modifier 1 (Coprinopsis cinerea (strain Okayama-7 / 130 / ATCC MYA-4618 / FGSC 9003) (Inky cap fungus)).